The chain runs to 188 residues: V-type ATP synthase subunit E (188 aa).

The protein belongs to the V-ATPase E subunit family.

Its function is as follows. Produces ATP from ADP in the presence of a proton gradient across the membrane. The polypeptide is V-type ATP synthase subunit E (Thermus thermophilus (strain ATCC BAA-163 / DSM 7039 / HB27)).